Reading from the N-terminus, the 324-residue chain is Thiamine thiazole synthase (324 aa).

Residues cysteine 86, 107–108 (EA), glycine 115, and valine 180 each bind substrate. Cysteine 213 is subject to 2,3-didehydroalanine (Cys). Substrate-binding positions include aspartate 215, histidine 230, methionine 282, and 292–294 (RMG).

The protein belongs to the THI4 family. As to quaternary structure, homooctamer. Fe cation is required as a cofactor. Post-translationally, during the catalytic reaction, a sulfide is transferred from Cys-213 to a reaction intermediate, generating a dehydroalanine residue.

It is found in the cytoplasm. It localises to the nucleus. The catalysed reaction is [ADP-thiazole synthase]-L-cysteine + glycine + NAD(+) = [ADP-thiazole synthase]-dehydroalanine + ADP-5-ethyl-4-methylthiazole-2-carboxylate + nicotinamide + 3 H2O + 2 H(+). Its function is as follows. Involved in biosynthesis of the thiamine precursor thiazole. Catalyzes the conversion of NAD and glycine to adenosine diphosphate 5-(2-hydroxyethyl)-4-methylthiazole-2-carboxylic acid (ADT), an adenylated thiazole intermediate. The reaction includes an iron-dependent sulfide transfer from a conserved cysteine residue of the protein to a thiazole intermediate. The enzyme can only undergo a single turnover, which suggests it is a suicide enzyme. May have additional roles in adaptation to various stress conditions and in DNA damage tolerance. The polypeptide is Thiamine thiazole synthase (sti35) (Fusarium solani subsp. phaseoli (Nectria haematococca)).